A 757-amino-acid polypeptide reads, in one-letter code: Glutathione biosynthesis bifunctional protein GshAB (757 aa).

The interval 1–337 (MKIQHIIHEN…LGKARLAEVA (337 aa)) is glutamate--cysteine ligase. In terms of domain architecture, ATP-grasp spans 494-753 (KKVLQKAGFN…LTQNVIKMLF (260 aa)). ATP is bound at residue 521 to 580 (ALFENRAVVIKPKSTNYGLGITIFQQGVQNREDFAKALEIAFREDKEVMVEDYLVGTEYR). D702, E723, and N725 together coordinate Mg(2+). Residues D702, E723, and N725 each contribute to the Mn(2+) site.

The protein in the N-terminal section; belongs to the glutamate--cysteine ligase type 1 family. Type 2 subfamily. As to quaternary structure, monomer. Mg(2+) serves as cofactor. The cofactor is Mn(2+).

The catalysed reaction is L-cysteine + L-glutamate + ATP = gamma-L-glutamyl-L-cysteine + ADP + phosphate + H(+). It catalyses the reaction gamma-L-glutamyl-L-cysteine + glycine + ATP = glutathione + ADP + phosphate + H(+). Its pathway is sulfur metabolism; glutathione biosynthesis; glutathione from L-cysteine and L-glutamate: step 1/2. It functions in the pathway sulfur metabolism; glutathione biosynthesis; glutathione from L-cysteine and L-glutamate: step 2/2. Functionally, synthesizes glutathione from L-glutamate and L-cysteine via gamma-L-glutamyl-L-cysteine. In Pasteurella multocida (strain Pm70), this protein is Glutathione biosynthesis bifunctional protein GshAB.